The primary structure comprises 360 residues: Aminomethyltransferase (360 aa).

It belongs to the GcvT family. In terms of assembly, the glycine cleavage system is composed of four proteins: P, T, L and H.

It catalyses the reaction N(6)-[(R)-S(8)-aminomethyldihydrolipoyl]-L-lysyl-[protein] + (6S)-5,6,7,8-tetrahydrofolate = N(6)-[(R)-dihydrolipoyl]-L-lysyl-[protein] + (6R)-5,10-methylene-5,6,7,8-tetrahydrofolate + NH4(+). The glycine cleavage system catalyzes the degradation of glycine. In Legionella pneumophila (strain Lens), this protein is Aminomethyltransferase.